The sequence spans 180 residues: MNNQLHATTIFAIRHNGRAAMSGDGQVTLGQQVIMKQTARKVRRLFNDEVVAGFAGSVADAFTLFEMFEAKLYEYNGNLSRAAVELAKEWRGDKMLRQLEAMLIVMNKDELLVVSGTGEVIQPDDDIIAIGSGGNYALSAGRALKRHASTLSARDIAQASLETAADICVFTNHNIIIEEI.

Threonine 8 is an active-site residue. Alanine 165, cysteine 168, and threonine 171 together coordinate Na(+).

Belongs to the peptidase T1B family. HslV subfamily. In terms of assembly, a double ring-shaped homohexamer of HslV is capped on each side by a ring-shaped HslU homohexamer. The assembly of the HslU/HslV complex is dependent on binding of ATP.

It is found in the cytoplasm. It carries out the reaction ATP-dependent cleavage of peptide bonds with broad specificity.. With respect to regulation, allosterically activated by HslU binding. Protease subunit of a proteasome-like degradation complex believed to be a general protein degrading machinery. This chain is ATP-dependent protease subunit HslV, found in Macrococcus caseolyticus (strain JCSC5402) (Macrococcoides caseolyticum).